The primary structure comprises 496 residues: uncharacterized protein (496 aa).

13 helical membrane-spanning segments follow: residues 5–25, 45–65, 77–97, 127–147, 161–181, 193–213, 239–259, 278–298, 325–345, 374–394, 396–416, 424–444, and 450–470; these read LTAL…GFLA, FGGL…YTFL, VAFF…FFLP, LVAI…LSGI, VKFV…FSGI, ILVW…HFNG, IPWF…WAHA, FLPL…IAFL, FAYA…AIGA, MVFV…TALV, LQLL…VSLF, ATVI…ITQS, and EGFW…PLFV.

This sequence belongs to the sodium:solute symporter (SSF) (TC 2.A.21) family.

The protein localises to the cell membrane. This is an uncharacterized protein from Bacillus subtilis (strain 168).